A 524-amino-acid polypeptide reads, in one-letter code: Nickel-binding periplasmic protein (524 aa).

The N-terminal stretch at 1 to 22 (MLSTLRRTLFALLACASFIVHA) is a signal peptide.

The protein belongs to the bacterial solute-binding protein 5 family.

It is found in the periplasm. Involved in a nickel transport system, probably represents the nickel binder. In Escherichia coli (strain K12), this protein is Nickel-binding periplasmic protein (nikA).